Consider the following 2282-residue polypeptide: Serine/threonine-protein kinase TEL1 (2282 aa).

Residues 1325–1844 enclose the FAT domain; the sequence is EIVNSALTLH…LYQISSLMRT (520 aa). Residues 1939-2250 enclose the PI3K/PI4K catalytic domain; that stretch reads VLAQVIKAGG…LSGVKGKLAV (312 aa). Residues 1945 to 1951 form a G-loop region; that stretch reads KAGGISH. The interval 2115–2123 is catalytic loop; sequence GIGDRHCNN. Residues 2135–2159 are activation loop; that stretch reads HIDLGISFDQGKNLTVPEKVPFRLT. The 33-residue stretch at 2250 to 2282 folds into the FATC domain; it reads VRLSTEAVVRELIGEAVSVENLAVIFHGWTPFY.

It belongs to the PI3/PI4-kinase family. ATM subfamily. As to quaternary structure, associates with DNA double-strand breaks.

It localises to the nucleus. The protein resides in the chromosome. Its subcellular location is the telomere. It carries out the reaction L-seryl-[protein] + ATP = O-phospho-L-seryl-[protein] + ADP + H(+). The enzyme catalyses L-threonyl-[protein] + ATP = O-phospho-L-threonyl-[protein] + ADP + H(+). In terms of biological role, serine/threonine protein kinase which activates checkpoint signaling upon genotoxic stresses such as ionizing radiation (IR), ultraviolet light (UV), or DNA replication stalling, thereby acting as a DNA damage sensor. Recognizes the substrate consensus sequence [ST]-Q. Phosphorylates histone H2A to form H2AS128ph (gamma-H2A) at sites of DNA damage, involved in the regulation of DNA damage response mechanism. Required for the control of telomere length and genome stability. The sequence is that of Serine/threonine-protein kinase TEL1 (TEL1) from Yarrowia lipolytica (strain CLIB 122 / E 150) (Yeast).